We begin with the raw amino-acid sequence, 1107 residues long: DNA-directed RNA polymerase subunit beta (1107 aa).

Over residues 1062–1075 (DNEGNEKEKARELG) the composition is skewed to basic and acidic residues. The tract at residues 1062-1081 (DNEGNEKEKARELGLDLPDN) is disordered.

It belongs to the RNA polymerase beta chain family. In terms of assembly, the RNAP catalytic core consists of 2 alpha, 1 beta, 1 beta' and 1 omega subunit. When a sigma factor is associated with the core the holoenzyme is formed, which can initiate transcription.

It carries out the reaction RNA(n) + a ribonucleoside 5'-triphosphate = RNA(n+1) + diphosphate. In terms of biological role, DNA-dependent RNA polymerase catalyzes the transcription of DNA into RNA using the four ribonucleoside triphosphates as substrates. The protein is DNA-directed RNA polymerase subunit beta of Syntrophomonas wolfei subsp. wolfei (strain DSM 2245B / Goettingen).